A 484-amino-acid chain; its full sequence is Gasdermin-D (484 aa).

Residue Tyr37 is modified to Phosphotyrosine. Cys56 carries the S-(2-succinyl)cysteine modification. 2 consecutive transmembrane segments (beta stranded) span residues 91–97 (QGSVELA) and 103–108 (KIAGGA). Tyr158 is subject to Phosphotyrosine. The next 2 membrane-spanning stretches (beta stranded) occupy residues 180 to 186 (GSGRFSL) and 191 to 197 (CLQGEGQ). Residue Ser185 is modified to Phosphoserine. S-(2-succinyl)cysteine is present on residues Cys191 and Cys268. Cys191 carries S-palmitoyl cysteine lipidation. Residues 277–296 (VPAEGAFTEDFQGLRAEVET) are linker helix loop. Cys309 is modified (S-(2-succinyl)cysteine). A glycan (O-linked (GlcNAc) serine) is linked at Ser338. Cys467 carries the post-translational modification S-(2-succinyl)cysteine.

It belongs to the gasdermin family. Homooligomer; homooligomeric ring-shaped pore complex containing 27-28 subunits when inserted in the membrane. Homooligomerization is promoted by the mTORC1 complex in macrophages. In response to a canonical inflammasome stimulus, such as nigericin, recruited to NLRP3 inflammasone with similar kinetics to that of uncleaved CASP1 precursor. Although this recruitment is also observed in the absence of PYCARD, it is more efficient in its presence. Cleavage at Asp-275 by CASP1 (mature and uncleaved precursor forms), CASP4, CASP5 or CASP8 relieves autoinhibition and is sufficient to initiate pyroptosis. Cleavage by CASP1 and CASP4 is not strictly dependent on the consensus cleavage site on GSDMD but depends on an exosite interface on CASP1 that recognizes and binds the Gasdermin-D, C-terminal (GSDMD-CT) part. Cleavage by CASP8 takes place following inactivation of MAP3K7/TAK1 by Yersinia toxin YopJ. Cleavage at Asp-87 by CASP3 or CASP7 inactivates the ability to mediate pyroptosis, but generates the Gasdermin-D, p13 chain, which translocates to the nucleus and acts as a transcription regulator. Cleavage by papain allergen generates the Gasdermin-D, p40 chain. In terms of processing, palmitoylated at Cys-191 by ZDHHC5 and ZDHHC9 in response to microbial infection and danger signals. Palmitoylation takes place before cleavage by caspases (CASP1, CASP4, CASP5 or CASP8) and is required for membrane translocation and pore formation. Depalmitoylated by LYPLA2. Post-translationally, succination of Cys-191 by the Krebs cycle intermediate fumarate, which leads to S-(2-succinyl)cysteine residues, inhibits processing by caspases, and ability to initiate pyroptosis. Succination modification is catalyzed by a non-enzymatic reaction caused by an accumulation of fumarate. Glycosylated: O-GlcNAcylation by OGT leads to reduced cleavage by CASP4 and decreased LPS-induced endothelial cell pyroptosis. In terms of processing, (Microbial infection) Cleaved and inactivated by Protease 3C from Human enterovirus 71 (EV71), preventing GSDMD-mediated pyroptosis. Post-translationally, (Microbial infection) Cleaved and inactivated by the 3C-like proteinase nsp5 from human coronavirus SARS-CoV-2, preventing GSDMD-mediated pyroptosis. (Microbial infection) Ubiquitinated by S.flexneri IpaH7.8, leading to its degradation by the proteasome. As to expression, expressed in the suprabasal cells of esophagus, as well as in the isthmus/neck, pit, and gland of the stomach, suggesting preferential expression in differentiating cells.

The protein localises to the cytoplasm. It localises to the cytosol. It is found in the inflammasome. The protein resides in the cell membrane. Its subcellular location is the secreted. The protein localises to the mitochondrion membrane. It localises to the nucleus. With respect to regulation, the full-length protein before cleavage is inactive: intramolecular interactions between N- and C-terminal domains mediate autoinhibition in the absence of activation signal. The intrinsic pyroptosis-inducing activity is carried by the released N-terminal moiety (Gasdermin-D, N-terminal) following cleavage by caspases CASP1, CASP4, CASP5 or CASP8. Cleavage at Asp-87 by CASP3 or CASP7 inactivates the ability to mediate pyroptosis. Homooligomerization and pore formation is specifically inhibited by VHH(GSDMD-1) and, to a lesser extent, VHH(GSDMD-2) nanobodies, protecting against excessive pyroptosis. Inhibited by small molecule NU6300, which covalently reacts with Cys-191, thereby preventing palmitoylation and pyroptosis. Precursor of a pore-forming protein that plays a key role in host defense against pathogen infection and danger signals. This form constitutes the precursor of the pore-forming protein: upon cleavage, the released N-terminal moiety (Gasdermin-D, N-terminal) binds to membranes and forms pores, triggering pyroptosis. Functionally, promotes pyroptosis in response to microbial infection and danger signals. Produced by the cleavage of gasdermin-D by inflammatory caspases CASP1, CASP4 or CASP5 in response to canonical, as well as non-canonical (such as cytosolic LPS) inflammasome activators. After cleavage, moves to the plasma membrane where it strongly binds to inner leaflet lipids, including monophosphorylated phosphatidylinositols, such as phosphatidylinositol 4-phosphate, bisphosphorylated phosphatidylinositols, such as phosphatidylinositol (4,5)-bisphosphate, as well as phosphatidylinositol (3,4,5)-bisphosphate, and more weakly to phosphatidic acid and phosphatidylserine. Homooligomerizes within the membrane and forms pores of 10-15 nanometers (nm) of inner diameter, allowing the release of mature interleukin-1 (IL1B and IL18) and triggering pyroptosis. Gasdermin pores also allow the release of mature caspase-7 (CASP7). In some, but not all, cells types, pyroptosis is followed by pyroptotic cell death, which is caused by downstream activation of ninjurin-1 (NINJ1), which mediates membrane rupture (cytolysis). Also forms pores in the mitochondrial membrane, resulting in release of mitochondrial DNA (mtDNA) into the cytosol. Gasdermin-D, N-terminal released from pyroptotic cells into the extracellular milieu rapidly binds to and kills both Gram-negative and Gram-positive bacteria, without harming neighboring mammalian cells, as it does not disrupt the plasma membrane from the outside due to lipid-binding specificity. Under cell culture conditions, also active against intracellular bacteria, such as Listeria monocytogenes. Also active in response to MAP3K7/TAK1 inactivation by Yersinia toxin YopJ, which triggers cleavage by CASP8 and subsequent activation. Required for mucosal tissue defense against enteric pathogens. Activation of the non-canonical inflammasome in brain endothelial cells can lead to excessive pyroptosis, leading to blood-brain barrier breakdown. Strongly binds to bacterial and mitochondrial lipids, including cardiolipin. Does not bind to unphosphorylated phosphatidylinositol, phosphatidylethanolamine nor phosphatidylcholine. Its function is as follows. Transcription coactivator produced by the cleavage by CASP3 or CASP7 in the upper small intestine in response to dietary antigens. Required to maintain food tolerance in small intestine: translocates to the nucleus and acts as a coactivator for STAT1 to induce the transcription of CIITA and MHC class II molecules, which in turn induce type 1 regulatory T (Tr1) cells in upper small intestine. In terms of biological role, produced by the cleavage by papain allergen. After cleavage, moves to the plasma membrane and homooligomerizes within the membrane and forms pores of 10-15 nanometers (nm) of inner diameter, allowing the specific release of mature interleukin-33 (IL33), promoting type 2 inflammatory immune response. In Homo sapiens (Human), this protein is Gasdermin-D.